An 842-amino-acid chain; its full sequence is Glycogen phosphorylase, muscle form (842 aa).

The residue at position 2 (Ser2) is an N-acetylserine. At Ser15 the chain carries Phosphoserine; by PHK; in form phosphorylase A. Asp43 and Tyr76 together coordinate AMP. Tyr204 and Tyr227 each carry phosphotyrosine. 310-319 (RRFKSSKFGC) provides a ligand contact to AMP. A Phosphoserine modification is found at Ser430. Tyr473 bears the Phosphotyrosine mark. Residue Ser514 is modified to Phosphoserine. Residue Lys681 is modified to N6-(pyridoxal phosphate)lysine. 2 positions are modified to phosphoserine: Ser747 and Ser748.

The protein belongs to the glycogen phosphorylase family. In terms of assembly, homodimer. Homotetramer; to form the enzymatically active phosphorylase A. Pyridoxal 5'-phosphate is required as a cofactor. Post-translationally, phosphorylation of Ser-15 converts phosphorylase B (unphosphorylated) to phosphorylase A.

The enzyme catalyses [(1-&gt;4)-alpha-D-glucosyl](n) + phosphate = [(1-&gt;4)-alpha-D-glucosyl](n-1) + alpha-D-glucose 1-phosphate. Its activity is regulated as follows. Allosterically regulated through the non-covalent binding of metabolites, being activated by AMP and inhibited by ATP, ADP, and glucose-6-phosphate. The activity is also controlled by post-translational modifications including phosphorylation. Functionally, allosteric enzyme that catalyzes the rate-limiting step in glycogen catabolism, the phosphorolytic cleavage of glycogen to produce glucose-1-phosphate, and plays a central role in maintaining cellular and organismal glucose homeostasis. The chain is Glycogen phosphorylase, muscle form from Macaca fascicularis (Crab-eating macaque).